Consider the following 668-residue polypeptide: MELEVPDEAESAEAGAVPSEAAWAAESGAAAGLAQKKAAPTEVLSMTAQPGPGHGKKLGHRGVDASGETTYKKTTSSTLKGAIQLGIGYTVGHLSSKPERDVLMQDFYVVESIFFPSEGSNLTPAHHFQDFRFKTYAPVAFRYFRELFGIRPDDYLYSLCNEPLIELSNPGASGSLFYVTSDDEFIIKTVMHKEAEFLQKLLPGYYMNLNQNPRTLLPKFYGLYCVQSGGKNIRVVVMNNILPRVVKMHLKFDLKGSTYKRRASKKEKEKSFPTYKDLDFMQDMPEGLLLDADTFSALVKTLQRDCLVLESFKIMDYSLLLGVHNIDQHERERQAQGAQSTSDEKRPVGQKALYSTAMESIQGGAARGEAIESDDTMGGIPAVNGRGERLLLHIGIIDILQSYRFIKKLEHTWKALVHDGDTVSVHRPSFYAERFFKFMSNTVFRKNSSLKSSPSKKGRGGALLAVKPLGPTAAFSASQIPSEREEAQYDLRGARSYPTLEDEGRPDLLPCTPPSFEEATTASIATTLSSTSLSIPERSPSETSEQPRYRRRTQSSGQDGRPQEEPPAEEDLQQITVQVEPACSVEIVVPKEEDAGVEASPAGASAAVEVETASQASDEEGAPASQASDEEDAPATDIYFPTDERSWVYSPLHYSAQAPPASDGESDT.

The tract at residues 45–67 (SMTAQPGPGHGKKLGHRGVDASG) is disordered. The PIPK domain maps to 75–443 (TSSTLKGAIQ…RFFKFMSNTV (369 aa)). N6-acetyllysine is present on residues Lys265 and Lys268. Residue Arg459 is modified to Asymmetric dimethylarginine; alternate. Arg459 is subject to Omega-N-methylarginine; alternate. A compositionally biased stretch (low complexity) spans 526 to 535 (TTLSSTSLSI). 2 disordered regions span residues 526–578 (TTLS…ITVQ) and 593–642 (EDAG…YFPT). Ser555 is subject to Phosphoserine. The residue at position 639 (Tyr639) is a Phosphotyrosine; by EGFR. Residues 641-668 (PTDERSWVYSPLHYSAQAPPASDGESDT) form a mediates interaction with TLN2 region. A Phosphotyrosine; by CSK modification is found at Tyr649. The residue at position 650 (Ser650) is a Phosphoserine; by CDK5, MAPK1 and CDK1. Ser662 and Ser666 each carry phosphoserine. Thr668 bears the Phosphothreonine mark.

In terms of assembly, interacts with TLN1. Interacts with TLN2; interaction stimulates 1-phosphatidylinositol-4-phosphate 5-kinase activity. May compete with beta-integrins for the same binding site on TLN1 and TLN2. Interacts with ARF6; interaction stimulates 1-phosphatidylinositol-4-phosphate 5-kinase activity. Interacts with AP2B1. Interacts with AP2M1; phosphorylation of PIP5K1C by CSK disrupts the interaction; clathrin competes with PIP5K1C. Interacts with CDH1. Interacts with CSK. Interacts with PLCG1; interaction is abolished upon EGF stimulation. Interacts with LAPTM4B; promotes SNX5 association with LAPTM4B; kinase activity of PIP5K1C is required; interaction is regulated by phosphatidylinositol 4,5-bisphosphate generated by PIP5K1C. In terms of processing, phosphorylation on Ser-650 negatively regulates binding to TLN2 and is strongly stimulated in mitosis. Phosphorylation on Tyr-649 is necessary for targeting to focal adhesions. Phosphorylation on Ser-650 and Tyr-649 are mutually exclusive. Phosphorylated by SYK and CSK. Tyrosine phosphorylation is enhanced by PTK2 signaling. Phosphorylated at Tyr-639 upon EGF stimulation. Some studies suggest that phosphorylation on Tyr-649 enhances binding to tailins (TLN1 and TLN2). According to PubMed:15738269 phosphorylation at Tyr-649 does not directly enhance binding to tailins (TLN1 and TLN2) but may act indirectly by inhibiting phosphorylation at Ser-650. Acetylation at Lys-265 and Lys-268 seems to decrease lipid 1-phosphatidylinositol-4-phosphate 5-kinase activity. Deacetylation of these sites by SIRT1 positively regulates the exocytosis of TSH-containing granules from pituitary cells. Isoform 1 is strongly expressed in brain and also detected in heart and lung. As to expression, isoform 2 is strongly expressed in pancreas and liver and in lesser quantities in brain, heart, lung and kidney. In terms of tissue distribution, isoform 3 is detected in large amounts in heart and large intestine, is also present in lung, pancreas and thyroid, and to a lesser extent in brain, stomach and kidney.

The protein localises to the cell membrane. Its subcellular location is the endomembrane system. The protein resides in the cytoplasm. It is found in the cell junction. It localises to the focal adhesion. The protein localises to the adherens junction. Its subcellular location is the cell projection. The protein resides in the ruffle membrane. It is found in the phagocytic cup. It localises to the uropodium. The protein localises to the nucleus. The catalysed reaction is a 1,2-diacyl-sn-glycero-3-phospho-(1D-myo-inositol 4-phosphate) + ATP = a 1,2-diacyl-sn-glycero-3-phospho-(1D-myo-inositol-4,5-bisphosphate) + ADP + H(+). The enzyme catalyses 1-octadecanoyl-2-(5Z,8Z,11Z,14Z)-eicosatetraenoyl-sn-glycero-3-phospho-1D-myo-inositol 4-phosphate + ATP = 1-octadecanoyl-2-(5Z,8Z,11Z,14Z)-eicosatetraenoyl-sn-glycero-3-phospho-1D-myo-inositol 4,5-bisphosphate + ADP + H(+). It catalyses the reaction 1-octadecanoyl-2-(9Z)-octadecenoyl-sn-glycero-3-phospho-1D-myo-inositol 4-phosphate + ATP = 1-octadecanoyl-2-(9Z)-octadecenoyl-sn-glycero-3-phospho-1D-myo-inositol 4,5-bisphosphate + ADP + H(+). It carries out the reaction 1-octadecanoyl-2-(9Z)-octadecenoyl-sn-glycero-3-phospho-1D-myo-inositol + ATP = 1-octadecanoyl-2-(9Z)-octadecenoyl-sn-glycero-3-phospho-1D-myo-inositol 5-phosphate + ADP + H(+). The catalysed reaction is 1-octadecanoyl-2-(9Z,12Z)-octadecadienoyl-sn-glycero-3-phospho-1D-myo-inositol + ATP = 1-octadecanoyl-2-(9Z,12Z)-octadecadienoyl-sn-glycero-3-phospho-1D-myo-inositol 5-phosphate + ADP + H(+). The enzyme catalyses 1-octadecanoyl-2-(5Z,8Z,11Z,14Z-eicosatetraenoyl)-sn-glycero-3-phospho-(1D-myo-inositol) + ATP = 1-octadecanoyl-2-(5Z,8Z,11Z,14Z)-eicosatetraenoyl-sn-glycero-3-phospho-1D-myo-inositol 5-phosphate + ADP + H(+). It catalyses the reaction 1,2-di-(9Z,12Z)-octadecadienoyl-sn-glycero-3-phospho-1D-myo-inositol + ATP = 1,2-di(9Z,12Z)-octadecadienoyl-sn-glycero-3-phospho-1D-myo-inositol 5-phosphate + ADP + H(+). Functionally, catalyzes the phosphorylation of phosphatidylinositol 4-phosphate (PtdIns(4)P/PI4P) to form phosphatidylinositol 4,5-bisphosphate (PtdIns(4,5)P2/PIP2), a lipid second messenger that regulates several cellular processes such as signal transduction, vesicle trafficking, actin cytoskeleton dynamics, cell adhesion, and cell motility. PtdIns(4,5)P2 can directly act as a second messenger or can be utilized as a precursor to generate other second messengers: inositol 1,4,5-trisphosphate (IP3), diacylglycerol (DAG) or phosphatidylinositol-3,4,5-trisphosphate (PtdIns(3,4,5)P3/PIP3). PIP5K1A-mediated phosphorylation of PtdIns(4)P is the predominant pathway for PtdIns(4,5)P2 synthesis. Together with PIP5K1A, is required for phagocytosis, both enzymes regulating different types of actin remodeling at sequential steps. Promotes particle attachment by generating the pool of PtdIns(4,5)P2 that induces controlled actin depolymerization to facilitate Fc-gamma-R clustering. Mediates RAC1-dependent reorganization of actin filaments. Required for synaptic vesicle transport. Controls the plasma membrane pool of PtdIns(4,5)P2 implicated in synaptic vesicle endocytosis and exocytosis. Plays a role in endocytosis mediated by clathrin and AP-2 (adaptor protein complex 2). Required for clathrin-coated pits assembly at the synapse. Participates in cell junction assembly. Modulates adherens junctions formation by facilitating CDH1/cadherin trafficking. Required for focal adhesion dynamics. Modulates the targeting of talins (TLN1 and TLN2) to the plasma membrane and their efficient assembly into focal adhesions. Regulates the interaction between talins (TLN1 and TLN2) and beta-integrins. Required for uropodium formation and retraction of the cell rear during directed migration. Has a role in growth factor-stimulated directional cell migration and adhesion. Required for talin assembly into nascent adhesions forming at the leading edge toward the direction of the growth factor. Negative regulator of T-cell activation and adhesion. Negatively regulates integrin alpha-L/beta-2 (LFA-1) polarization and adhesion induced by T-cell receptor. Together with PIP5K1A has a role during embryogenesis and together with PIP5K1B may have a role immediately after birth. In Homo sapiens (Human), this protein is Phosphatidylinositol 4-phosphate 5-kinase type-1 gamma.